Consider the following 249-residue polypeptide: Probable phosphatase VV2_1469 (249 aa).

9 residues coordinate Zn(2+): His-8, His-10, His-16, His-41, Glu-74, His-102, His-132, Asp-194, and His-196.

Belongs to the PHP family. Zn(2+) is required as a cofactor.

The protein is Probable phosphatase VV2_1469 of Vibrio vulnificus (strain CMCP6).